A 906-amino-acid chain; its full sequence is Putative disease resistance protein At1g59780 (906 aa).

Residues 20-59 (KLLSQEYERFQGVEEQITELRDDLKMLMAFLSDADAKKQT) adopt a coiled-coil conformation. An NB-ARC domain is found at 138–452 (SHAQLERKRE…AEGITYPGNY (315 aa)). 187-194 (GLGGLGKT) is a binding site for ATP. LRR repeat units follow at residues 572 to 597 (LPLL…IGKL), 599 to 619 (HLKY…SLRN), 620 to 644 (LKSL…VFKE), and 825 to 850 (MPLL…RFIS).

Belongs to the disease resistance NB-LRR family.

Its function is as follows. Potential disease resistance protein. This Arabidopsis thaliana (Mouse-ear cress) protein is Putative disease resistance protein At1g59780.